A 412-amino-acid chain; its full sequence is Lipid droplet organization protein LDO45 (412 aa).

The Cytoplasmic segment spans residues 1 to 170 (MAARNRRKNN…TVEKLNALQN (170 aa)). The helical transmembrane segment at 171–191 (SLYEVFWIIFIYLNYWFPNVG) threads the bilayer. Residues 192-247 (DYVSNTFGQQDSIIIRISLSKSHFRALREKSSQKVQQAVKNIYFCFQEKPYLTAFK) lie on the Lumenal side of the membrane. The helical transmembrane segment at 248 to 268 (VSFAIGLVIPCSLLFLIMVST) threads the bilayer. The Cytoplasmic portion of the chain corresponds to 269 to 271 (ATF). The chain crosses the membrane as a helical span at residues 272 to 292 (FFFVYLTLFVVIGFFSSLFII). P293 is a topological domain (lumenal). A helical membrane pass occupies residues 294-314 (LLGISFVFAIGVVSFGFCSNM). The Cytoplasmic portion of the chain corresponds to 315–412 (SFKMAQLIYV…NKAGNKFQLS (98 aa)). The interval 347-374 (QEPQEPLSTLRPVSNPTIPSPLRQTARP) is disordered. A compositionally biased stretch (polar residues) spans 357–373 (RPVSNPTIPSPLRQTAR).

As to quaternary structure, interacts specifically with the seipin complex FLD1-LDB16. Only a fraction appears to associate with the seipin core components, suggesting that it may be an ancillary subunit of the complex.

It is found in the endoplasmic reticulum membrane. The protein localises to the lipid droplet. Functionally, involved in lipid droplet (LD) organization. Modulates triglyceride (TAG) storage by reducing DGA1 LD localization. Promotes LD targeting of some proteins, including PDR16. In Saccharomyces cerevisiae (strain ATCC 204508 / S288c) (Baker's yeast), this protein is Lipid droplet organization protein LDO45.